We begin with the raw amino-acid sequence, 320 residues long: Putative S-adenosyl-L-methionine-dependent methyltransferase MAP_4078 (320 aa).

S-adenosyl-L-methionine-binding positions include Asp132 and Asp161 to Leu162. The disordered stretch occupies residues Pro294 to Arg320.

Belongs to the UPF0677 family.

Functionally, exhibits S-adenosyl-L-methionine-dependent methyltransferase activity. This chain is Putative S-adenosyl-L-methionine-dependent methyltransferase MAP_4078, found in Mycolicibacterium paratuberculosis (strain ATCC BAA-968 / K-10) (Mycobacterium paratuberculosis).